The sequence spans 212 residues: Thymidylate kinase (212 aa).

ATP is bound at residue 11-18 (GPEGAGKT).

This sequence belongs to the thymidylate kinase family.

It catalyses the reaction dTMP + ATP = dTDP + ADP. Phosphorylation of dTMP to form dTDP in both de novo and salvage pathways of dTTP synthesis. This is Thymidylate kinase from Streptococcus pneumoniae (strain Taiwan19F-14).